A 377-amino-acid polypeptide reads, in one-letter code: Succinyl-diaminopimelate desuccinylase (377 aa).

A Zn(2+)-binding site is contributed by H67. D69 is an active-site residue. D100 provides a ligand contact to Zn(2+). The Proton acceptor role is filled by E134. Positions 135, 163, and 349 each coordinate Zn(2+).

It belongs to the peptidase M20A family. DapE subfamily. Homodimer. Zn(2+) serves as cofactor. Co(2+) is required as a cofactor.

The enzyme catalyses N-succinyl-(2S,6S)-2,6-diaminopimelate + H2O = (2S,6S)-2,6-diaminopimelate + succinate. It functions in the pathway amino-acid biosynthesis; L-lysine biosynthesis via DAP pathway; LL-2,6-diaminopimelate from (S)-tetrahydrodipicolinate (succinylase route): step 3/3. Its function is as follows. Catalyzes the hydrolysis of N-succinyl-L,L-diaminopimelic acid (SDAP), forming succinate and LL-2,6-diaminopimelate (DAP), an intermediate involved in the bacterial biosynthesis of lysine and meso-diaminopimelic acid, an essential component of bacterial cell walls. This chain is Succinyl-diaminopimelate desuccinylase, found in Haemophilus influenzae (strain PittEE).